The sequence spans 90 residues: Large ribosomal subunit protein bL31 (90 aa).

The segment at 71–90 is disordered; it reads KVKKFPSNADNQKEPAEEQE. The segment covering 81-90 has biased composition (basic and acidic residues); sequence NQKEPAEEQE.

Belongs to the bacterial ribosomal protein bL31 family. Type A subfamily. As to quaternary structure, part of the 50S ribosomal subunit.

Functionally, binds the 23S rRNA. The sequence is that of Large ribosomal subunit protein bL31 (rpmE) from Aster yellows witches'-broom phytoplasma (strain AYWB).